The primary structure comprises 430 residues: Ribulose bisphosphate carboxylase (430 aa).

Lysine 160 acts as the Proton acceptor in catalysis. Position 162 (lysine 162) interacts with substrate. Mg(2+) contacts are provided by lysine 186, aspartate 188, and glutamate 189. N6-carboxylysine is present on lysine 186. Histidine 278 serves as the catalytic Proton acceptor. Residues arginine 279, histidine 311, 348-350, and 370-373 contribute to the substrate site; these read SGG and QAGG.

This sequence belongs to the RuBisCO large chain family. Type III subfamily. Homodimer or homodecamer. In contrast to form I RuBisCO, the form III RuBisCO is composed solely of large subunits. Requires Mg(2+) as cofactor.

It catalyses the reaction 2 (2R)-3-phosphoglycerate + 2 H(+) = D-ribulose 1,5-bisphosphate + CO2 + H2O. The catalysed reaction is D-ribulose 1,5-bisphosphate + O2 = 2-phosphoglycolate + (2R)-3-phosphoglycerate + 2 H(+). Catalyzes the addition of molecular CO(2) and H(2)O to ribulose 1,5-bisphosphate (RuBP), generating two molecules of 3-phosphoglycerate (3-PGA). Functions in an archaeal AMP degradation pathway, together with AMP phosphorylase and R15P isomerase. The protein is Ribulose bisphosphate carboxylase of Pyrococcus horikoshii (strain ATCC 700860 / DSM 12428 / JCM 9974 / NBRC 100139 / OT-3).